Here is a 114-residue protein sequence, read N- to C-terminus: Ig kappa chain V-I region S107A (114 aa).

The interval 1-23 is framework-1; sequence DIVMTQSPTFLAVTASKKVTISC. Cysteines 23 and 94 form a disulfide. The interval 24 to 40 is complementarity-determining-1; sequence TASESLYSSKHKVHYLA. The framework-2 stretch occupies residues 41–55; the sequence is WYQKKPEQSPKLLIY. The segment at 56–62 is complementarity-determining-2; sequence GASNRYI. Residues 63 to 94 are framework-3; that stretch reads GVPDRFTGSGSGTDFTLTISSVQVEDLTHYYC. Positions 95-103 are complementarity-determining-3; it reads AQFYSYPLT. The tract at residues 104–113 is framework-4; the sequence is FGAGTKLELK.

Its function is as follows. Anti-phosphocholine antibody. The polypeptide is Ig kappa chain V-I region S107A (Igkv7-33) (Mus musculus (Mouse)).